The chain runs to 422 residues: UPF0761 membrane protein XAC0937 (422 aa).

6 consecutive transmembrane segments (helical) span residues 45-65, 102-122, 151-171, 179-199, 213-233, and 247-267; these read VFALVPLAIVVFGVLSAFPAF, FTVAGMVALVASLLITLHSIE, GTMLAAASMAMAAYVFALPLF, LAEFAWRLAPMAVEFVCIVLI, ALPGALLAVILMEIVKWGFGF, and ALSALPILLLWIYLSWVSVLL.

This sequence belongs to the UPF0761 family.

Its subcellular location is the cell inner membrane. The chain is UPF0761 membrane protein XAC0937 from Xanthomonas axonopodis pv. citri (strain 306).